The chain runs to 220 residues: Ribonuclease HII (220 aa).

The RNase H type-2 domain occupies 27-220 (CIIVGVDEVG…SKISYMFKNS (194 aa)). Positions 33, 34, and 128 each coordinate a divalent metal cation.

It belongs to the RNase HII family. Requires Mn(2+) as cofactor. The cofactor is Mg(2+).

It is found in the cytoplasm. It catalyses the reaction Endonucleolytic cleavage to 5'-phosphomonoester.. Its function is as follows. Endonuclease that specifically degrades the RNA of RNA-DNA hybrids. The sequence is that of Ribonuclease HII from Ehrlichia ruminantium (strain Gardel).